The chain runs to 571 residues: MKQSQMLIPTLKEIPSDAEVVSHQLMLRGGYIKQITAGMYAYLPLAYRVMKKIENIIREEMDRIDAVEMLVPAVVPAELWQESGRYETYGPTLFKLKDRHERDFILGPTHEETFTTIVRDAIKSYKKLPLYLYQIQMKYRDENRPRFGLLRGREFLMLDGYSFHVDDASMEKVFNDTDKAYQRIFERCGLDFRGIIADSGAMGGNRSKEFQAIAEVGEDTIAYSDSSDYAANIEMAKNLRIPKQSHETPKDLEKVATPNAKTIVEVAEFLGTDTQNEIKTLLFIADDEPVVVLMRGIDEVNEVKLKNHLGAIDLRPAEEEEAVKFLGANFGSLGPVGIDENLKVLADLDVEGMINASVGANEDGYHYINVNIDRDYHVDEFLDLREVREGELSPDGEGVLKFTRGIEIGHIFQLGTRYSESLGADVLDENGRQVPMRMGCYGIGVSRLLSAIVEQHNDENGIAWPREIAPFDIHVVPVNVKNDTQRELSEKVTAMLEDAGYQVLVDDRKERAGVKFADSDLIGLPIRITVGKKADEGIVEIKLRQNGEKIEVKLEELLNSVKILFNETITD.

The protein belongs to the class-II aminoacyl-tRNA synthetase family. ProS type 1 subfamily. In terms of assembly, homodimer.

It is found in the cytoplasm. The enzyme catalyses tRNA(Pro) + L-proline + ATP = L-prolyl-tRNA(Pro) + AMP + diphosphate. Catalyzes the attachment of proline to tRNA(Pro) in a two-step reaction: proline is first activated by ATP to form Pro-AMP and then transferred to the acceptor end of tRNA(Pro). As ProRS can inadvertently accommodate and process non-cognate amino acids such as alanine and cysteine, to avoid such errors it has two additional distinct editing activities against alanine. One activity is designated as 'pretransfer' editing and involves the tRNA(Pro)-independent hydrolysis of activated Ala-AMP. The other activity is designated 'posttransfer' editing and involves deacylation of mischarged Ala-tRNA(Pro). The misacylated Cys-tRNA(Pro) is not edited by ProRS. The protein is Proline--tRNA ligase of Ligilactobacillus salivarius (strain UCC118) (Lactobacillus salivarius).